A 127-amino-acid chain; its full sequence is uncharacterized protein (127 aa).

The HTH asnC-type domain occupies 1-46 (MEVGLSPSACLRRIKLMEQAGVIRGYTALVDPTQSESTIAVIINIT).

Not known, symbiotically active. This is an uncharacterized protein from Sinorhizobium fredii (strain NBRC 101917 / NGR234).